Consider the following 406-residue polypeptide: Protein phosphatase 2C (406 aa).

A PPM-type phosphatase domain is found at Arg-23–Phe-274. Mn(2+) is bound by residues Asp-55, Gly-56, Asp-221, and Asp-265.

Belongs to the PP2C family. As to quaternary structure, monomer. It depends on Mg(2+) as a cofactor. Mn(2+) is required as a cofactor.

The catalysed reaction is O-phospho-L-seryl-[protein] + H2O = L-seryl-[protein] + phosphate. The enzyme catalyses O-phospho-L-threonyl-[protein] + H2O = L-threonyl-[protein] + phosphate. Enzyme with a broad specificity. The protein is Protein phosphatase 2C of Leishmania chagasi.